The primary structure comprises 89 residues: Small ribosomal subunit protein uS17 (89 aa).

It belongs to the universal ribosomal protein uS17 family. Part of the 30S ribosomal subunit.

In terms of biological role, one of the primary rRNA binding proteins, it binds specifically to the 5'-end of 16S ribosomal RNA. This Xanthomonas campestris pv. campestris (strain B100) protein is Small ribosomal subunit protein uS17.